An 88-amino-acid chain; its full sequence is Small ribosomal subunit protein bS20 (88 aa).

The protein belongs to the bacterial ribosomal protein bS20 family.

Functionally, binds directly to 16S ribosomal RNA. The chain is Small ribosomal subunit protein bS20 from Bradyrhizobium sp. (strain BTAi1 / ATCC BAA-1182).